The following is a 375-amino-acid chain: Queuine tRNA-ribosyltransferase (375 aa).

The active-site Proton acceptor is the aspartate 94. Substrate contacts are provided by residues 94 to 98, aspartate 148, glutamine 191, and glycine 218; that span reads DSGGF. Residues 249-255 form an RNA binding region; sequence GVGSPDD. Aspartate 268 functions as the Nucleophile in the catalytic mechanism. The RNA binding; important for wobble base 34 recognition stretch occupies residues 273–277; it reads TRIAR. 4 residues coordinate Zn(2+): cysteine 306, cysteine 308, cysteine 311, and histidine 337.

The protein belongs to the queuine tRNA-ribosyltransferase family. Homodimer. Within each dimer, one monomer is responsible for RNA recognition and catalysis, while the other monomer binds to the replacement base PreQ1. It depends on Zn(2+) as a cofactor.

It catalyses the reaction 7-aminomethyl-7-carbaguanine + guanosine(34) in tRNA = 7-aminomethyl-7-carbaguanosine(34) in tRNA + guanine. The protein operates within tRNA modification; tRNA-queuosine biosynthesis. In terms of biological role, catalyzes the base-exchange of a guanine (G) residue with the queuine precursor 7-aminomethyl-7-deazaguanine (PreQ1) at position 34 (anticodon wobble position) in tRNAs with GU(N) anticodons (tRNA-Asp, -Asn, -His and -Tyr). Catalysis occurs through a double-displacement mechanism. The nucleophile active site attacks the C1' of nucleotide 34 to detach the guanine base from the RNA, forming a covalent enzyme-RNA intermediate. The proton acceptor active site deprotonates the incoming PreQ1, allowing a nucleophilic attack on the C1' of the ribose to form the product. After dissociation, two additional enzymatic reactions on the tRNA convert PreQ1 to queuine (Q), resulting in the hypermodified nucleoside queuosine (7-(((4,5-cis-dihydroxy-2-cyclopenten-1-yl)amino)methyl)-7-deazaguanosine). The protein is Queuine tRNA-ribosyltransferase of Thermoanaerobacter sp. (strain X514).